A 176-amino-acid chain; its full sequence is CASP-like protein 5A1 (176 aa).

The Cytoplasmic portion of the chain corresponds to 1-45 (MDASHPAVYPVGVPPTAVDPPPRVRMKDYEGMPSTLGGLVLRSGQ). A helical transmembrane segment spans residues 46–66 (FACAVTALSIMISIPDFSSVT). A67 is a topological domain (extracellular). Residues 68–88 (FCYLVAAMALQLLWSVSLAVV) form a helical membrane-spanning segment. Topologically, residues 89–102 (DGYALLLRRTLHNP) are cytoplasmic. Residues 103 to 123 (VLLSLLVIGDWVTSTLSLAAA) form a helical membrane-spanning segment. At 124-151 (CSSAGITVLIDSDLAQCAHNHCGRYEAA) the chain is on the extracellular side. A helical transmembrane segment spans residues 152 to 172 (VAMAFLTWFLVSLSFFFSFWL). Residues 173-176 (LATR) are Cytoplasmic-facing.

Belongs to the Casparian strip membrane proteins (CASP) family. In terms of assembly, homodimer and heterodimers.

The protein resides in the cell membrane. The chain is CASP-like protein 5A1 from Selaginella moellendorffii (Spikemoss).